Consider the following 392-residue polypeptide: 23S rRNA (uracil(747)-C(5))-methyltransferase RlmC (392 aa).

[4Fe-4S] cluster-binding residues include Cys4, Cys12, Cys15, and Cys93. Positions 218, 247, 275, and 321 each coordinate S-adenosyl-L-methionine. The active-site Nucleophile is Cys348.

Belongs to the class I-like SAM-binding methyltransferase superfamily. RNA M5U methyltransferase family. RlmC subfamily.

The enzyme catalyses uridine(747) in 23S rRNA + S-adenosyl-L-methionine = 5-methyluridine(747) in 23S rRNA + S-adenosyl-L-homocysteine + H(+). Catalyzes the formation of 5-methyl-uridine at position 747 (m5U747) in 23S rRNA. This chain is 23S rRNA (uracil(747)-C(5))-methyltransferase RlmC, found in Haemophilus influenzae (strain PittGG).